Here is a 297-residue protein sequence, read N- to C-terminus: uncharacterized protein (297 aa).

The N-terminal stretch at 1–24 (MRAINKFLITVCIALLASVAVALG) is a signal peptide. The heme site is built by Cys-58, Cys-61, His-62, Cys-141, Cys-144, His-145, Cys-167, Cys-170, His-171, Cys-223, Cys-226, His-227, Cys-264, Cys-267, and His-268. The segment at 277-297 (TNSVDTWSREGEGAEVQQLPH) is disordered.

Binds 5 heme groups per subunit.

This is an uncharacterized protein from Archaeoglobus fulgidus (strain ATCC 49558 / DSM 4304 / JCM 9628 / NBRC 100126 / VC-16).